We begin with the raw amino-acid sequence, 338 residues long: Tryptophan--tRNA ligase (338 aa).

Residues 11–13 (QPS) and 19–20 (GN) each bind ATP. The short motif at 12–20 (PSGELSIGN) is the 'HIGH' region element. Asp135 is an L-tryptophan binding site. ATP contacts are provided by residues 147-149 (GSD), Val189, and 198-202 (KMSKS). Positions 198–202 (KMSKS) match the 'KMSKS' region motif.

This sequence belongs to the class-I aminoacyl-tRNA synthetase family. As to quaternary structure, homodimer.

The protein resides in the cytoplasm. It catalyses the reaction tRNA(Trp) + L-tryptophan + ATP = L-tryptophyl-tRNA(Trp) + AMP + diphosphate + H(+). Its function is as follows. Catalyzes the attachment of tryptophan to tRNA(Trp). This is Tryptophan--tRNA ligase from Aliivibrio fischeri (strain ATCC 700601 / ES114) (Vibrio fischeri).